We begin with the raw amino-acid sequence, 267 residues long: uncharacterized protein (267 aa).

An ABC transporter domain is found at 2–198; that stretch reads LGANGAGKTT…FRNKFIVIEG (197 aa). 3–10 serves as a coordination point for ATP; the sequence is GANGAGKT.

This sequence belongs to the ABC transporter superfamily.

This is an uncharacterized protein from Alkalihalophilus pseudofirmus (strain ATCC BAA-2126 / JCM 17055 / OF4) (Bacillus pseudofirmus).